A 271-amino-acid chain; its full sequence is Shikimate dehydrogenase (NADP(+)) (271 aa).

Shikimate-binding positions include 14–16 (SRS) and threonine 61. Lysine 65 acts as the Proton acceptor in catalysis. 2 residues coordinate shikimate: asparagine 86 and aspartate 102. NADP(+)-binding positions include 126 to 130 (GAGGA), 149 to 154 (NRTFSR), and methionine 213. Residue tyrosine 215 coordinates shikimate. An NADP(+)-binding site is contributed by glycine 238.

Belongs to the shikimate dehydrogenase family. Homodimer.

The enzyme catalyses shikimate + NADP(+) = 3-dehydroshikimate + NADPH + H(+). It functions in the pathway metabolic intermediate biosynthesis; chorismate biosynthesis; chorismate from D-erythrose 4-phosphate and phosphoenolpyruvate: step 4/7. Involved in the biosynthesis of the chorismate, which leads to the biosynthesis of aromatic amino acids. Catalyzes the reversible NADPH linked reduction of 3-dehydroshikimate (DHSA) to yield shikimate (SA). The sequence is that of Shikimate dehydrogenase (NADP(+)) from Histophilus somni (strain 129Pt) (Haemophilus somnus).